Consider the following 294-residue polypeptide: Glycine--tRNA ligase alpha subunit (294 aa).

Belongs to the class-II aminoacyl-tRNA synthetase family. Tetramer of two alpha and two beta subunits.

It is found in the cytoplasm. The enzyme catalyses tRNA(Gly) + glycine + ATP = glycyl-tRNA(Gly) + AMP + diphosphate. The protein is Glycine--tRNA ligase alpha subunit of Nostoc sp. (strain PCC 7120 / SAG 25.82 / UTEX 2576).